The following is a 21-amino-acid chain: CAPECRSFCPDQKCLKDCGCI.

3 disulfides stabilise this stretch: C1/C18, C5/C14, and C9/C20.

Expressed in tentacles.

The protein localises to the nematocyst. The protein resides in the secreted. Peptide of unknown function. Does not exhibit antimicrobial activity against Escherichia coli and Staphylococcus aureus. Promotes cell proliferation of human fibroblast skin cells. Does not exhibit any effect on voltage-gated ion channels, including potassium, sodium, and calcium channels. The polypeptide is Peptide Hact-2 (Heliofungia actiniformis (Mushroom coral)).